The sequence spans 1199 residues: Tubulin-specific chaperone D (1199 aa).

2 disordered regions span residues 1–23 and 337–361; these read MALS…VEDA and QHSI…QDDV. Over residues 14–23 the composition is skewed to acidic residues; the sequence is DPVEDPVEDA. HEAT repeat units follow at residues 368–406, 603–639, 757–793, and 1111–1147; these read VIEQ…ADDV, EHTA…ARSL, AAAQ…PAFF, and GDVR…VLTY.

It belongs to the TBCD family. In terms of assembly, found in a complex with at least ARL2, PPP2CB, PPP2R1A, PPP2R2A, PPP2R5E and TBCD. Interacts with PPP2CB. Part of a supercomplex made of cofactors A to E. Cofactors A and D function by capturing and stabilizing tubulin in a quasi-native conformation. Cofactor E binds to the cofactor D-tubulin complex; interaction with cofactor C then causes the release of tubulin polypeptides that are committed to the native state. Interacts with ARL2; interaction is enhanced with the GDP-bound form of ARL2. Does not interact with ARL3, ARL4A and ARL4D. Interacts with beta tubulin. Interacts with TBCE.

It localises to the cell junction. The protein localises to the tight junction. The protein resides in the lateral cell membrane. Its subcellular location is the cytoplasm. It is found in the adherens junction. It localises to the cytoskeleton. The protein localises to the microtubule organizing center. The protein resides in the centrosome. Functionally, tubulin-folding protein implicated in the first step of the tubulin folding pathway and required for tubulin complex assembly. Involved in the regulation of microtubule polymerization or depolymerization, it modulates microtubule dynamics by capturing GTP-bound beta-tubulin (TUBB). Its ability to interact with beta tubulin is regulated via its interaction with ARL2. Acts as a GTPase-activating protein (GAP) for ARL2. Induces microtubule disruption in absence of ARL2. Increases degradation of beta tubulin, when overexpressed in polarized cells. Promotes epithelial cell detachment, a process antagonized by ARL2. Induces tight adherens and tight junctions disassembly at the lateral cell membrane. Required for correct assembly and maintenance of the mitotic spindle, and proper progression of mitosis. Involved in neuron morphogenesis. The protein is Tubulin-specific chaperone D (TBCD) of Bos taurus (Bovine).